The sequence spans 369 residues: Cystathionine gamma-synthase (369 aa).

Lys200 bears the N6-(pyridoxal phosphate)lysine mark.

This sequence belongs to the trans-sulfuration enzymes family. Homotetramer. Pyridoxal 5'-phosphate serves as cofactor.

The protein resides in the cytoplasm. It carries out the reaction O-succinyl-L-homoserine + L-cysteine = L,L-cystathionine + succinate + H(+). Functionally, catalyzes the formation of L-cystathionine from O-succinyl-L-homoserine (OSHS) and L-cysteine, via a gamma-replacement reaction. In the absence of thiol, catalyzes gamma-elimination to form 2-oxobutanoate, succinate and ammonia. The polypeptide is Cystathionine gamma-synthase (metB) (Haemophilus influenzae (strain ATCC 51907 / DSM 11121 / KW20 / Rd)).